The primary structure comprises 214 residues: Osteoclast-stimulating factor 1 (214 aa).

At serine 2 the chain carries N-acetylserine. The 60-residue stretch at 12-71 (GQVKVFRALYTFEPRTPDELYFEEGDIIYITDMSDTSWWKGTCKGRTGLIPSNYVAEQAE) folds into the SH3 domain. 3 ANK repeats span residues 72 to 101 (SIDNPLHEAAKRGNLSWLRECLDNRVGVNG), 105 to 135 (AGSTALYWACHGGHKDIVEVLFTQPNVELNQ), and 139 to 168 (LGDTALHAAAWKGYADIVQLLLAKGARTDL). Position 200 is a phosphothreonine (threonine 200). Phosphoserine occurs at positions 202 and 213.

As to quaternary structure, interacts with SRC and SMN1. Interacts with FASLG.

Its subcellular location is the cytoplasm. Its function is as follows. Induces bone resorption, acting probably through a signaling cascade which results in the secretion of factor(s) enhancing osteoclast formation and activity. The sequence is that of Osteoclast-stimulating factor 1 (Ostf1) from Rattus norvegicus (Rat).